A 140-amino-acid polypeptide reads, in one-letter code: Putative nickel-responsive regulator 3 (140 aa).

Ni(2+) contacts are provided by histidine 81, histidine 92, histidine 94, and cysteine 100.

It belongs to the transcriptional regulatory CopG/NikR family. Requires Ni(2+) as cofactor.

Transcriptional regulator. The chain is Putative nickel-responsive regulator 3 from Methanosarcina mazei (strain ATCC BAA-159 / DSM 3647 / Goe1 / Go1 / JCM 11833 / OCM 88) (Methanosarcina frisia).